Reading from the N-terminus, the 326-residue chain is uncharacterized protein (326 aa).

3 Solcar repeats span residues 15–106 (EFLV…VRRV), 114–215 (ETHA…ATDF), and 234–322 (LKTW…SKAL). Transmembrane regions (helical) follow at residues 16 to 36 (FLVK…SVVA), 83 to 103 (TATL…YEQV), 120 to 140 (FLSG…LELI), 191 to 211 (FSVT…AYDL), 240 to 260 (LLCG…FEVC), and 294 to 314 (FFVG…TSFF).

The protein belongs to the mitochondrial carrier (TC 2.A.29) family.

It localises to the mitochondrion inner membrane. This is an uncharacterized protein from Schizosaccharomyces pombe (strain 972 / ATCC 24843) (Fission yeast).